Consider the following 355-residue polypeptide: Protein RecA (355 aa).

67–74 (GPESSGKT) lines the ATP pocket. The segment at 331 to 355 (NQDDKPDFTPAAHEVDEGSEAKENF) is disordered.

It belongs to the RecA family.

It is found in the cytoplasm. Functionally, can catalyze the hydrolysis of ATP in the presence of single-stranded DNA, the ATP-dependent uptake of single-stranded DNA by duplex DNA, and the ATP-dependent hybridization of homologous single-stranded DNAs. It interacts with LexA causing its activation and leading to its autocatalytic cleavage. The sequence is that of Protein RecA from Erwinia tasmaniensis (strain DSM 17950 / CFBP 7177 / CIP 109463 / NCPPB 4357 / Et1/99).